A 129-amino-acid polypeptide reads, in one-letter code: Phosphoribosyl-AMP cyclohydrolase (129 aa).

D85 serves as a coordination point for Mg(2+). Residue C86 participates in Zn(2+) binding. D87 and D89 together coordinate Mg(2+). Zn(2+)-binding residues include C102 and C109.

This sequence belongs to the PRA-CH family. Homodimer. The cofactor is Mg(2+). Requires Zn(2+) as cofactor.

It localises to the cytoplasm. It catalyses the reaction 1-(5-phospho-beta-D-ribosyl)-5'-AMP + H2O = 1-(5-phospho-beta-D-ribosyl)-5-[(5-phospho-beta-D-ribosylamino)methylideneamino]imidazole-4-carboxamide. It functions in the pathway amino-acid biosynthesis; L-histidine biosynthesis; L-histidine from 5-phospho-alpha-D-ribose 1-diphosphate: step 3/9. Functionally, catalyzes the hydrolysis of the adenine ring of phosphoribosyl-AMP. The chain is Phosphoribosyl-AMP cyclohydrolase (hisI) from Methanococcus maripaludis (strain DSM 14266 / JCM 13030 / NBRC 101832 / S2 / LL).